The primary structure comprises 216 residues: MKYGIVGYSGRMGQEIQKVFSEKGHELVLKVDVNGVEELGSPDVVVDFSSPEALPKTVELCKKYRAGLVLGTTALKEEHLQMLRELSKEVPVVQAYNFSIGINVLKRFLSELVKVLEDWDVEIVETHHRFKKDAPSGTAILLESALGKSVPIHSLRVGGVPGDHVVVFGNIGETIEIKHRAISRTVFAIGALKAAEFLVGKDPGMYSFEEVIFGGE.

Residues 7 to 12, 71 to 73, and 95 to 98 contribute to the NAD(+) site; these read GYSGRM, GTT, and AYNF. The active-site Proton donor/acceptor is the His127. His128 provides a ligand contact to (S)-2,3,4,5-tetrahydrodipicolinate. The Proton donor role is filled by Lys131. Residue 137 to 138 participates in (S)-2,3,4,5-tetrahydrodipicolinate binding; sequence GT.

It belongs to the DapB family.

It is found in the cytoplasm. It carries out the reaction (S)-2,3,4,5-tetrahydrodipicolinate + NAD(+) + H2O = (2S,4S)-4-hydroxy-2,3,4,5-tetrahydrodipicolinate + NADH + H(+). The catalysed reaction is (S)-2,3,4,5-tetrahydrodipicolinate + NADP(+) + H2O = (2S,4S)-4-hydroxy-2,3,4,5-tetrahydrodipicolinate + NADPH + H(+). It participates in amino-acid biosynthesis; L-lysine biosynthesis via DAP pathway; (S)-tetrahydrodipicolinate from L-aspartate: step 4/4. Functionally, catalyzes the conversion of 4-hydroxy-tetrahydrodipicolinate (HTPA) to tetrahydrodipicolinate. This chain is 4-hydroxy-tetrahydrodipicolinate reductase, found in Thermotoga sp. (strain RQ2).